Consider the following 430-residue polypeptide: Tol-Pal system protein TolB (430 aa).

The signal sequence occupies residues 1 to 21 (MKQAFRVALGFLVLWASVLHA).

Belongs to the TolB family. The Tol-Pal system is composed of five core proteins: the inner membrane proteins TolA, TolQ and TolR, the periplasmic protein TolB and the outer membrane protein Pal. They form a network linking the inner and outer membranes and the peptidoglycan layer.

It is found in the periplasm. Functionally, part of the Tol-Pal system, which plays a role in outer membrane invagination during cell division and is important for maintaining outer membrane integrity. TolB occupies a key intermediary position in the Tol-Pal system because it communicates directly with both membrane-embedded components, Pal in the outer membrane and TolA in the inner membrane. The chain is Tol-Pal system protein TolB from Yersinia pestis.